A 222-amino-acid polypeptide reads, in one-letter code: Germin-like protein 11-1 (222 aa).

Residues 1–23 (MKLSTVLCCYLLLLGLFAPEIIS) form the signal peptide. Cys-32 and Cys-49 are joined by a disulfide. The 124-residue stretch at 72–195 (DNMVRSSANI…AMFAPDSEVA (124 aa)) folds into the Cupin type-1 domain. The Mn(2+) site is built by His-111, His-113, Glu-118, and His-157.

Belongs to the germin family. As to quaternary structure, oligomer (believed to be a pentamer but probably hexamer).

The protein resides in the secreted. The protein localises to the extracellular space. It localises to the apoplast. Functionally, may play a role in plant defense. Probably has no oxalate oxidase activity even if the active site is conserved. In Oryza sativa subsp. japonica (Rice), this protein is Germin-like protein 11-1.